We begin with the raw amino-acid sequence, 367 residues long: DNA replication and repair protein RecF (367 aa).

30-37 (GANGSGKT) is an ATP binding site.

The protein belongs to the RecF family.

It is found in the cytoplasm. The RecF protein is involved in DNA metabolism; it is required for DNA replication and normal SOS inducibility. RecF binds preferentially to single-stranded, linear DNA. It also seems to bind ATP. The polypeptide is DNA replication and repair protein RecF (Pseudomonas syringae pv. tomato (strain ATCC BAA-871 / DC3000)).